We begin with the raw amino-acid sequence, 255 residues long: 5'-nucleotidase SurE (255 aa).

Residues Asp-7, Asp-8, Ser-38, and Asn-90 each contribute to the a divalent metal cation site.

The protein belongs to the SurE nucleotidase family. Requires a divalent metal cation as cofactor.

Its subcellular location is the cytoplasm. It catalyses the reaction a ribonucleoside 5'-phosphate + H2O = a ribonucleoside + phosphate. Nucleotidase that shows phosphatase activity on nucleoside 5'-monophosphates. In Picrophilus torridus (strain ATCC 700027 / DSM 9790 / JCM 10055 / NBRC 100828 / KAW 2/3), this protein is 5'-nucleotidase SurE.